Consider the following 1185-residue polypeptide: MCEVMPTINEGDRLGPPHGADADANFEQLMVNMLDEREKLLESLRESQETLAATQSRLQDAIHERDQLQRHLNSALPQEFATLTRELSMCREQLLEREEEISELKAERNNTRLLLEHLECLVSRHERSLRMTVVKRQAQSPSGVSSEVEVLKALKSLFEHHKALDEKVRERLRAALERVTTLEEQLAGAHQQVSALQQGAGVRDGAAEEEGTVELGPKRLWKEDTGRVEELQELLEKQNFELSQARERLVTLTTTVTELEEDLGTARRDLIKSEELSSKHQRDLREALAQKEDMEERITTLEKRYLAAQREATSIHDLNDKLENELANKESLHRQCEEKARHLQELLEVAEQKLQQTMRKAETLPEVEAELAQRIAALTKAEERHGNIEEHLRQLEGQLEEKNQELARTAVQVRQREKMNEDHNKRLSDTVDRLLSESNERLQLHLKERMAALEEKNTLIQELESSQRQIEEQHHHKGRLSEEIEKLRQEVDQLKGRGGPFVDGVHSRSHMGSAADVRFSLGTTTHAPPGVHRRYSALREESAKLALPLTVTLRSPTWMRMSQGVCCNLEYHSSGTLCGSSGPLPVPEMIQEEKESTELRAEEIETRVTSGSMEALNLKQLRKRGSIPTSLTALSLASASPPLSGRSTPKLTSRSAAQDLDRMGVMTLPSDLRKHRRKLLSPVSREENREDKATIKCETSPPSSPRTLRLEKLGHPALSQEEGKSALEDQGSNPSSSNSSQDSLHKGAKRKGIKSSIGRLFGKKEKGRLIQLSRDGATGHVLLTDSEFSMQEPMVPAKLGTQAEKDRRLKKKHQLLEDARRKGMPFAQWDGPTVVSWLELWVGMPAWYVAACRANVKSGAIMSALSDTEIQREIGISNALHRLKLRLAIQEMVSLTSPSAPPTSRTSSGNVWVTHEEMETLETSTKTDSEEGSWAQTLAYGDMNHEWIGNEWLPSLGLPQYRSYFMECLVDARMLDHLTKKDLRVHLKMVDSFHRTSLQYGIMCLKRLNYDRKELEKRREESQHEIKDVLVWTNDQVVHWVQSIGLRDYAGNLHESGVHGALLALDENFDHNTLALILQIPTQNTQARQVMEREFNNLLALGTDRKLDDGDDKVFRRAPSWRKRFRPREHHGRGGMLSASAETLPAGFRVSTLGTLQPPPAPPKKIMPEAHSHYLYGHMLSAFRD.

Coiled coils occupy residues 24-123 (ANFE…CLVS) and 165-499 (DEKV…GRGG). 2 disordered regions span residues 638–709 (SASP…RTLR) and 721–757 (EEGKSALEDQGSNPSSSNSSQDSLHKGAKRKGIKSSI). Position 640 is a phosphoserine (S640). The segment covering 645 to 656 (GRSTPKLTSRSA) has biased composition (polar residues). S681 is subject to Phosphoserine. Over residues 684–695 (SREENREDKATI) the composition is skewed to basic and acidic residues. Residues 729–742 (DQGSNPSSSNSSQD) are compositionally biased toward low complexity. 3 consecutive SAM domains span residues 829-895 (WDGP…MVSL), 944-1008 (NHEW…LKRL), and 1032-1101 (WTND…LLAL).

The protein belongs to the liprin family. Liprin-alpha subfamily. In terms of assembly, forms homodimers and heterodimers with liprins-alpha and liprins-beta. Interacts with the second PTPase domain of PTPRD, PTPRF and PTPRS. Interacts with RIMS1 and RIMS2. Interacts with GIT1 and GIT2. Interacts with GRIP1. Interacts with KIF1A. As to expression, expressed only in the heart, brain, and skeletal muscle.

Its subcellular location is the cytoplasm. It is found in the cell surface. Its function is as follows. May regulate the disassembly of focal adhesions. May localize receptor-like tyrosine phosphatases type 2A at specific sites on the plasma membrane, possibly regulating their interaction with the extracellular environment and their association with substrates. This is Liprin-alpha-4 (PPFIA4) from Homo sapiens (Human).